Consider the following 128-residue polypeptide: Large-conductance mechanosensitive channel (128 aa).

Helical transmembrane passes span 11–31 (FALK…AAFG) and 70–90 (GAFI…FIFV).

This sequence belongs to the MscL family. In terms of assembly, homopentamer.

It localises to the cell membrane. In terms of biological role, channel that opens in response to stretch forces in the membrane lipid bilayer. May participate in the regulation of osmotic pressure changes within the cell. The sequence is that of Large-conductance mechanosensitive channel from Listeria monocytogenes serotype 4b (strain CLIP80459).